The sequence spans 359 residues: DNA replication and repair protein RecF (359 aa).

ATP is bound at residue 30–37; that stretch reads GPNGSGKT.

The protein belongs to the RecF family.

Its subcellular location is the cytoplasm. Functionally, the RecF protein is involved in DNA metabolism; it is required for DNA replication and normal SOS inducibility. RecF binds preferentially to single-stranded, linear DNA. It also seems to bind ATP. The polypeptide is DNA replication and repair protein RecF (Psychromonas ingrahamii (strain DSM 17664 / CCUG 51855 / 37)).